Reading from the N-terminus, the 152-residue chain is Protein SprT-like (152 aa).

One can recognise a SprT-like domain in the interval 9-149; sequence LQKLTETISL…CGKCNGKLKE (141 aa). His-70 is a Zn(2+) binding site. The active site involves Glu-71. His-74 is a binding site for Zn(2+).

It belongs to the SprT family. Zn(2+) is required as a cofactor.

The protein resides in the cytoplasm. The sequence is that of Protein SprT-like from Staphylococcus saprophyticus subsp. saprophyticus (strain ATCC 15305 / DSM 20229 / NCIMB 8711 / NCTC 7292 / S-41).